Reading from the N-terminus, the 350-residue chain is Heat-inducible transcription repressor HrcA (350 aa).

Belongs to the HrcA family.

Negative regulator of class I heat shock genes (grpE-dnaK-dnaJ and groELS operons). Prevents heat-shock induction of these operons. This Ligilactobacillus salivarius (strain UCC118) (Lactobacillus salivarius) protein is Heat-inducible transcription repressor HrcA.